A 425-amino-acid polypeptide reads, in one-letter code: Proline iminopeptidase (425 aa).

Positions 52–315 constitute an AB hydrolase-1 domain; sequence PWLLYLQGGP…EFPALAWAQG (264 aa). Catalysis depends on S146, which acts as the Nucleophile. D351 is an active-site residue. H404 (proton donor) is an active-site residue.

This sequence belongs to the peptidase S33 family. In terms of assembly, homotetramer.

It localises to the cytoplasm. The catalysed reaction is Release of N-terminal proline from a peptide.. Higher activity toward long peptides. Acts on hydroxyproline beta-naphthylamide with almost as high an activity as on proline beta-naphthylamide. In Aeromonas sobria, this protein is Proline iminopeptidase (pip).